The sequence spans 463 residues: Glycine--tRNA ligase (463 aa).

Substrate is bound by residues arginine 102 and glutamate 165. ATP contacts are provided by residues 197–199 (RNE), 207–212 (FRTREF), 284–285 (EL), and 328–331 (GLTR). A substrate-binding site is contributed by 212–216 (FEQME). Residue 324–328 (EPAAG) coordinates substrate.

It belongs to the class-II aminoacyl-tRNA synthetase family. In terms of assembly, homodimer.

It localises to the cytoplasm. The enzyme catalyses tRNA(Gly) + glycine + ATP = glycyl-tRNA(Gly) + AMP + diphosphate. Its function is as follows. Catalyzes the attachment of glycine to tRNA(Gly). This chain is Glycine--tRNA ligase, found in Mycobacterium bovis (strain ATCC BAA-935 / AF2122/97).